The primary structure comprises 103 residues: Large ribosomal subunit protein bL21 (103 aa).

Belongs to the bacterial ribosomal protein bL21 family. As to quaternary structure, part of the 50S ribosomal subunit. Contacts protein L20.

Its function is as follows. This protein binds to 23S rRNA in the presence of protein L20. The polypeptide is Large ribosomal subunit protein bL21 (Polaromonas sp. (strain JS666 / ATCC BAA-500)).